Reading from the N-terminus, the 315-residue chain is Methionyl-tRNA formyltransferase (315 aa).

Position 113-116 (Ser113–Pro116) interacts with (6S)-5,6,7,8-tetrahydrofolate.

This sequence belongs to the Fmt family.

The catalysed reaction is L-methionyl-tRNA(fMet) + (6R)-10-formyltetrahydrofolate = N-formyl-L-methionyl-tRNA(fMet) + (6S)-5,6,7,8-tetrahydrofolate + H(+). In terms of biological role, attaches a formyl group to the free amino group of methionyl-tRNA(fMet). The formyl group appears to play a dual role in the initiator identity of N-formylmethionyl-tRNA by promoting its recognition by IF2 and preventing the misappropriation of this tRNA by the elongation apparatus. In Salmonella gallinarum (strain 287/91 / NCTC 13346), this protein is Methionyl-tRNA formyltransferase.